Reading from the N-terminus, the 254-residue chain is Type III pantothenate kinase (254 aa).

22–29 (VLGNTHVR) lines the ATP pocket. Substrate-binding positions include Tyr89 and 93-96 (GLDR). Asp95 acts as the Proton acceptor in catalysis. Position 115 (Asp115) interacts with K(+). An ATP-binding site is contributed by Thr118. Thr173 serves as a coordination point for substrate.

This sequence belongs to the type III pantothenate kinase family. As to quaternary structure, homodimer. Requires NH4(+) as cofactor. The cofactor is K(+).

Its subcellular location is the cytoplasm. It catalyses the reaction (R)-pantothenate + ATP = (R)-4'-phosphopantothenate + ADP + H(+). The protein operates within cofactor biosynthesis; coenzyme A biosynthesis; CoA from (R)-pantothenate: step 1/5. In terms of biological role, catalyzes the phosphorylation of pantothenate (Pan), the first step in CoA biosynthesis. The chain is Type III pantothenate kinase from Synechococcus sp. (strain JA-2-3B'a(2-13)) (Cyanobacteria bacterium Yellowstone B-Prime).